The following is a 201-amino-acid chain: Recombination protein RecR (201 aa).

A C4-type zinc finger spans residues 60 to 75 (CKTCGNIDTQNPCTVC). A Toprim domain is found at 83-178 (SIIVVVADVA…KVTRLAHGVP (96 aa)).

Belongs to the RecR family.

Functionally, may play a role in DNA repair. It seems to be involved in an RecBC-independent recombinational process of DNA repair. It may act with RecF and RecO. The sequence is that of Recombination protein RecR from Rhodopseudomonas palustris (strain HaA2).